The primary structure comprises 340 residues: Probable sugar phosphate/phosphate translocator At3g14410 (340 aa).

Transmembrane regions (helical) follow at residues 12-32 (EFVTYAYILLYIALSSGQIFF), 44-64 (FPYPLGLTLLHMIFSSVLCFL), 80-100 (LEIYVTSVIPIGAMFAMTLWL), 110-130 (VAFAQMLKAIMPVAVFILGVA), 141-161 (LLIMSIISFGVLVASYGELNI), 163-183 (WIGVVYQMGGVVGEALRLIFM), 197-217 (ISLMYYVSPCSAICLFVPWIF), 234-254 (VVLTLNSLCTFALNLSVFLVI), 260-282 (LTIRVAGVVKDWVVVLVSALLFA), and 286-305 (LTIINLFGYAIAIAGVAAYN). A disordered region spans residues 320–340 (ETPGDAESIPLVSQGNTNTER). The span at 330–340 (LVSQGNTNTER) shows a compositional bias: polar residues.

This sequence belongs to the TPT transporter family. TPT (TC 2.A.7.9) subfamily.

It localises to the membrane. This Arabidopsis thaliana (Mouse-ear cress) protein is Probable sugar phosphate/phosphate translocator At3g14410.